A 150-amino-acid chain; its full sequence is Large ribosomal subunit protein bL9 (150 aa).

It belongs to the bacterial ribosomal protein bL9 family.

Binds to the 23S rRNA. The chain is Large ribosomal subunit protein bL9 from Photobacterium profundum (strain SS9).